A 288-amino-acid polypeptide reads, in one-letter code: Diaminopimelate epimerase (288 aa).

Substrate-binding residues include Asn-14 and Asn-67. Catalysis depends on Cys-76, which acts as the Proton donor. Substrate is bound by residues 77 to 78 (GN), Asn-166, Asn-199, and 217 to 218 (ER). Catalysis depends on Cys-226, which acts as the Proton acceptor. Position 227 to 228 (227 to 228 (GT)) interacts with substrate.

This sequence belongs to the diaminopimelate epimerase family. As to quaternary structure, homodimer.

The protein localises to the cytoplasm. It catalyses the reaction (2S,6S)-2,6-diaminopimelate = meso-2,6-diaminopimelate. It participates in amino-acid biosynthesis; L-lysine biosynthesis via DAP pathway; DL-2,6-diaminopimelate from LL-2,6-diaminopimelate: step 1/1. In terms of biological role, catalyzes the stereoinversion of LL-2,6-diaminopimelate (L,L-DAP) to meso-diaminopimelate (meso-DAP), a precursor of L-lysine and an essential component of the bacterial peptidoglycan. In Bacillus cereus (strain AH820), this protein is Diaminopimelate epimerase.